A 323-amino-acid polypeptide reads, in one-letter code: MKNILVTGGLGFIGSNFVNHISSKYDNVNIYVYDIGDYCASVENVEWNNRTKLIKGDIRNFDLIMHTLTEHEIDTIVHFAAHSHVDNSFKNSLAFTETNVFGTHVLLECSRMYGKLKLFFHMSTDEVYGEIDTTDTSREVSLLCPTNPYAATKAGAEHIVKSYFLSYKLPIIIARCNNVYGRNQYPEKLIPKFICSLLDGKKLHIQGTGNSRRNFIHAIDVADAVDLVINNGVIGETYNIGVTNEHSVLDVAQILCDIAGVNLENQLEYVPDRLFNDFRYNITNDKIKSLGWEQSRKDFKKELVELFDWYKVNRHRYNIPGSQ.

Residue threonine 124 participates in substrate binding. The active-site Proton donor is the aspartate 125. Active-site proton acceptor residues include glutamate 126 and tyrosine 149.

This sequence belongs to the NAD(P)-dependent epimerase/dehydratase family. dTDP-glucose dehydratase subfamily. The cofactor is NAD(+).

It carries out the reaction dTDP-alpha-D-glucose = dTDP-4-dehydro-6-deoxy-alpha-D-glucose + H2O. This is Putative dTDP-D-glucose 4,6-dehydratase from Acanthamoeba polyphaga mimivirus (APMV).